The primary structure comprises 354 residues: Uroporphyrinogen decarboxylase (354 aa).

Residues 27 to 31, Phe46, Asp77, Tyr153, Thr208, and His326 contribute to the substrate site; that span reads RQAGR.

Belongs to the uroporphyrinogen decarboxylase family. Homodimer.

It localises to the cytoplasm. It carries out the reaction uroporphyrinogen III + 4 H(+) = coproporphyrinogen III + 4 CO2. The protein operates within porphyrin-containing compound metabolism; protoporphyrin-IX biosynthesis; coproporphyrinogen-III from 5-aminolevulinate: step 4/4. Functionally, catalyzes the decarboxylation of four acetate groups of uroporphyrinogen-III to yield coproporphyrinogen-III. This chain is Uroporphyrinogen decarboxylase, found in Neisseria meningitidis serogroup A / serotype 4A (strain DSM 15465 / Z2491).